Reading from the N-terminus, the 291-residue chain is MEMO1 family protein TON_0132 (291 aa).

The protein belongs to the MEMO1 family.

The polypeptide is MEMO1 family protein TON_0132 (Thermococcus onnurineus (strain NA1)).